Consider the following 117-residue polypeptide: Ribosome-binding factor A (117 aa).

The protein belongs to the RbfA family. As to quaternary structure, monomer. Binds 30S ribosomal subunits, but not 50S ribosomal subunits or 70S ribosomes.

Its subcellular location is the cytoplasm. In terms of biological role, one of several proteins that assist in the late maturation steps of the functional core of the 30S ribosomal subunit. Associates with free 30S ribosomal subunits (but not with 30S subunits that are part of 70S ribosomes or polysomes). Required for efficient processing of 16S rRNA. May interact with the 5'-terminal helix region of 16S rRNA. This chain is Ribosome-binding factor A, found in Streptococcus thermophilus (strain CNRZ 1066).